An 81-amino-acid chain; its full sequence is Putative defensin-like protein 188 (81 aa).

Residues 1–19 (MKNSSLLFILIVVFVISSS) form the signal peptide. 4 cysteine pairs are disulfide-bonded: C31–C81, C37–C57, C43–C75, and C47–C77.

The protein belongs to the DEFL family.

The protein resides in the secreted. This chain is Putative defensin-like protein 188 (LCR41), found in Arabidopsis thaliana (Mouse-ear cress).